Consider the following 523-residue polypeptide: 2-isopropylmalate synthase (523 aa).

The Pyruvate carboxyltransferase domain occupies 5–267 (VIIFDTTLRD…HTAINHQEIW (263 aa)). Mn(2+) contacts are provided by Asp14, His202, His204, and Asn238. A regulatory domain region spans residues 392–523 (RLDYFSVQSG…QHNENNKETV (132 aa)).

It belongs to the alpha-IPM synthase/homocitrate synthase family. LeuA type 1 subfamily. In terms of assembly, homodimer. Mn(2+) is required as a cofactor.

It is found in the cytoplasm. The enzyme catalyses 3-methyl-2-oxobutanoate + acetyl-CoA + H2O = (2S)-2-isopropylmalate + CoA + H(+). Its pathway is amino-acid biosynthesis; L-leucine biosynthesis; L-leucine from 3-methyl-2-oxobutanoate: step 1/4. Functionally, catalyzes the condensation of the acetyl group of acetyl-CoA with 3-methyl-2-oxobutanoate (2-ketoisovalerate) to form 3-carboxy-3-hydroxy-4-methylpentanoate (2-isopropylmalate). The chain is 2-isopropylmalate synthase from Escherichia coli (strain K12 / MC4100 / BW2952).